A 250-amino-acid polypeptide reads, in one-letter code: Adenosine 5'-phosphosulfate reductase (250 aa).

Residues Cys119, Cys120, Cys202, and Cys205 each contribute to the [4Fe-4S] cluster site. Cys230 functions as the Nucleophile; cysteine thiosulfonate intermediate in the catalytic mechanism.

It belongs to the PAPS reductase family. CysH subfamily. It depends on [4Fe-4S] cluster as a cofactor.

Its subcellular location is the cytoplasm. The catalysed reaction is [thioredoxin]-disulfide + sulfite + AMP + 2 H(+) = adenosine 5'-phosphosulfate + [thioredoxin]-dithiol. Its pathway is sulfur metabolism; hydrogen sulfide biosynthesis; sulfite from sulfate. Catalyzes the formation of sulfite from adenosine 5'-phosphosulfate (APS) using thioredoxin as an electron donor. The chain is Adenosine 5'-phosphosulfate reductase from Burkholderia cepacia (Pseudomonas cepacia).